The sequence spans 521 residues: MFS siderochrome iron transporter 1 (521 aa).

Polar residues predominate over residues 1-10; the sequence is MDKTASLTSQ. The segment at 1–29 is disordered; the sequence is MDKTASLTSQDAEKHDPDALRKERATDPP. Positions 11–29 are enriched in basic and acidic residues; sequence DAEKHDPDALRKERATDPP. Transmembrane regions (helical) follow at residues 62–82, 99–119, 126–146, 148–168, and 187–207; these read WGLF…PLMG, FLSL…AFGC, WSFN…GGTQ, FVAL…NMPV, and ILSI…WPLI. Residue N209 is glycosylated (N-linked (GlcNAc...) asparagine). Transmembrane regions (helical) follow at residues 229-249, 330-350, 379-399, 404-424, 431-451, and 466-486; these read YLLF…FFVF, LAWS…ASTL, VIIA…VEQP, KGTL…TTTA, LGWN…LYAI, and GLTA…ALYA. N-linked (GlcNAc...) asparagine glycosylation is present at N487. Residues 491-511 traverse the membrane as a helical segment; the sequence is AVPVYVSGALIIASGAMALLL.

The protein belongs to the major facilitator superfamily.

The protein resides in the membrane. Functionally, major facilitator transporter probably involved in siderophore basidioferrin transmembrane transport. This Ceriporiopsis subvermispora (strain B) (White-rot fungus) protein is MFS siderochrome iron transporter 1.